We begin with the raw amino-acid sequence, 337 residues long: Phosphate acyltransferase (337 aa).

It belongs to the PlsX family. As to quaternary structure, homodimer. Probably interacts with PlsY.

The protein localises to the cytoplasm. It catalyses the reaction a fatty acyl-[ACP] + phosphate = an acyl phosphate + holo-[ACP]. It participates in lipid metabolism; phospholipid metabolism. Its function is as follows. Catalyzes the reversible formation of acyl-phosphate (acyl-PO(4)) from acyl-[acyl-carrier-protein] (acyl-ACP). This enzyme utilizes acyl-ACP as fatty acyl donor, but not acyl-CoA. The sequence is that of Phosphate acyltransferase from Listeria welshimeri serovar 6b (strain ATCC 35897 / DSM 20650 / CCUG 15529 / CIP 8149 / NCTC 11857 / SLCC 5334 / V8).